Consider the following 543-residue polypeptide: Ribosomal protein arginine N-methyltransferase rmt3 (543 aa).

The segment at Phe58–His81 adopts a C2H2-type zinc-finger fold. The 327-residue stretch at Asp217–Asn543 folds into the SAM-dependent MTase PRMT-type domain. The S-adenosyl-L-homocysteine site is built by Arg239, Gly263, Asp285, Ser287, Ile313, and Glu314. Residues Glu329 and Glu338 contribute to the active site.

It belongs to the class I-like SAM-binding methyltransferase superfamily. Protein arginine N-methyltransferase family. In terms of assembly, interacts with ef1a-c, rps2 and rps24. Note=Associates with the 40S ribosomal particle.

It is found in the cytoplasm. The protein localises to the cytosol. It catalyses the reaction L-arginyl-[protein] + S-adenosyl-L-methionine = N(omega)-methyl-L-arginyl-[protein] + S-adenosyl-L-homocysteine + H(+). The catalysed reaction is L-arginyl-[protein] + 2 S-adenosyl-L-methionine = N(omega),N(omega)-dimethyl-L-arginyl-[protein] + 2 S-adenosyl-L-homocysteine + 2 H(+). Methylates (mono and asymmetric dimethylation) the guanidino nitrogens of arginyl residues in ribosomal protein rps2. This is Ribosomal protein arginine N-methyltransferase rmt3 (rmt3) from Schizosaccharomyces pombe (strain 972 / ATCC 24843) (Fission yeast).